We begin with the raw amino-acid sequence, 344 residues long: tRNA N6-adenosine threonylcarbamoyltransferase (344 aa).

The Fe cation site is built by H111 and H115. Substrate contacts are provided by residues 134-138 (LVSGG), D167, G180, and N273. Fe cation is bound at residue D301.

Belongs to the KAE1 / TsaD family. Fe(2+) is required as a cofactor.

Its subcellular location is the cytoplasm. It catalyses the reaction L-threonylcarbamoyladenylate + adenosine(37) in tRNA = N(6)-L-threonylcarbamoyladenosine(37) in tRNA + AMP + H(+). In terms of biological role, required for the formation of a threonylcarbamoyl group on adenosine at position 37 (t(6)A37) in tRNAs that read codons beginning with adenine. Is involved in the transfer of the threonylcarbamoyl moiety of threonylcarbamoyl-AMP (TC-AMP) to the N6 group of A37, together with TsaE and TsaB. TsaD likely plays a direct catalytic role in this reaction. This is tRNA N6-adenosine threonylcarbamoyltransferase from Cupriavidus pinatubonensis (strain JMP 134 / LMG 1197) (Cupriavidus necator (strain JMP 134)).